The following is a 223-amino-acid chain: Arginine kinase (223 aa).

Residues Phe56–Met222 form the Phosphagen kinase C-terminal domain. ATP-binding positions include Ser59–Arg63 and His68. Cys141 provides a ligand contact to L-arginine. Residues Arg150–His154 and Arg175–Glu180 contribute to the ATP site. Position 180 (Glu180) interacts with L-arginine.

It belongs to the ATP:guanido phosphotransferase family.

The catalysed reaction is L-arginine + ATP = N(omega)-phospho-L-arginine + ADP + H(+). The protein is Arginine kinase of Chionoecetes opilio (Atlantic snow crab).